The primary structure comprises 458 residues: LysM domain-containing protein ARB_05157 (458 aa).

A signal peptide spans 1 to 19; the sequence is MVSLKVCFLLLASSELAFG. Residues 157–203 enclose the LysM 1 domain; sequence AFHLVKQGEDCGTISATYGITSAQFLAWNPSAGKDCTGLWANAYACV. Residues 210–232 are disordered; that stretch reads PPKTTSQAPQPTPTKPSNGIETP. The span at 212–229 shows a compositional bias: polar residues; sequence KTTSQAPQPTPTKPSNGI. LysM domains are found at residues 245 to 291, 325 to 371, and 409 to 455; these read KFHL…YACV, KFYL…YSCV, and KFHF…YLCV.

The protein localises to the secreted. Its function is as follows. Might have a role in sequestration of chitin oligosaccharides (breakdown products of fungal cell walls that are released during invasion and act as triggers of host immunity) to dampen host defense. The sequence is that of LysM domain-containing protein ARB_05157 from Arthroderma benhamiae (strain ATCC MYA-4681 / CBS 112371) (Trichophyton mentagrophytes).